Consider the following 507-residue polypeptide: Bifunctional purine biosynthesis protein PurH (507 aa).

In terms of domain architecture, MGS-like spans 1–149 (MSESKRIKTA…KNYNDVIIVA (149 aa)).

This sequence belongs to the PurH family.

The enzyme catalyses (6R)-10-formyltetrahydrofolate + 5-amino-1-(5-phospho-beta-D-ribosyl)imidazole-4-carboxamide = 5-formamido-1-(5-phospho-D-ribosyl)imidazole-4-carboxamide + (6S)-5,6,7,8-tetrahydrofolate. It carries out the reaction IMP + H2O = 5-formamido-1-(5-phospho-D-ribosyl)imidazole-4-carboxamide. The protein operates within purine metabolism; IMP biosynthesis via de novo pathway; 5-formamido-1-(5-phospho-D-ribosyl)imidazole-4-carboxamide from 5-amino-1-(5-phospho-D-ribosyl)imidazole-4-carboxamide (10-formyl THF route): step 1/1. It participates in purine metabolism; IMP biosynthesis via de novo pathway; IMP from 5-formamido-1-(5-phospho-D-ribosyl)imidazole-4-carboxamide: step 1/1. The polypeptide is Bifunctional purine biosynthesis protein PurH (Bacteroides thetaiotaomicron (strain ATCC 29148 / DSM 2079 / JCM 5827 / CCUG 10774 / NCTC 10582 / VPI-5482 / E50)).